The following is an 810-amino-acid chain: Phenylalanine--tRNA ligase beta subunit (810 aa).

The tRNA-binding domain maps to 39–154 (APPTEKIVVG…EGTPVGQDIR (116 aa)). The B5 domain maps to 405 to 480 (PQRAPVSMRA…RIYGFEKIPA (76 aa)). Residues D458, D464, E467, and E468 each coordinate Mg(2+). The FDX-ACB domain maps to 707-809 (SKFPPVRRDI…MARVYGARLR (103 aa)).

This sequence belongs to the phenylalanyl-tRNA synthetase beta subunit family. Type 1 subfamily. In terms of assembly, tetramer of two alpha and two beta subunits. The cofactor is Mg(2+).

Its subcellular location is the cytoplasm. It catalyses the reaction tRNA(Phe) + L-phenylalanine + ATP = L-phenylalanyl-tRNA(Phe) + AMP + diphosphate + H(+). This chain is Phenylalanine--tRNA ligase beta subunit, found in Burkholderia mallei (strain ATCC 23344).